We begin with the raw amino-acid sequence, 363 residues long: Phosphoserine aminotransferase (363 aa).

Residue R46 coordinates L-glutamate. Pyridoxal 5'-phosphate is bound by residues 80–81 (AT), W106, T156, D176, and Q199. K200 bears the N6-(pyridoxal phosphate)lysine mark. 241 to 242 (NT) is a pyridoxal 5'-phosphate binding site.

It belongs to the class-V pyridoxal-phosphate-dependent aminotransferase family. SerC subfamily. In terms of assembly, homodimer. Requires pyridoxal 5'-phosphate as cofactor.

The protein resides in the cytoplasm. The catalysed reaction is O-phospho-L-serine + 2-oxoglutarate = 3-phosphooxypyruvate + L-glutamate. The enzyme catalyses 4-(phosphooxy)-L-threonine + 2-oxoglutarate = (R)-3-hydroxy-2-oxo-4-phosphooxybutanoate + L-glutamate. The protein operates within amino-acid biosynthesis; L-serine biosynthesis; L-serine from 3-phospho-D-glycerate: step 2/3. It functions in the pathway cofactor biosynthesis; pyridoxine 5'-phosphate biosynthesis; pyridoxine 5'-phosphate from D-erythrose 4-phosphate: step 3/5. Functionally, catalyzes the reversible conversion of 3-phosphohydroxypyruvate to phosphoserine and of 3-hydroxy-2-oxo-4-phosphonooxybutanoate to phosphohydroxythreonine. The polypeptide is Phosphoserine aminotransferase (Leptospira interrogans serogroup Icterohaemorrhagiae serovar copenhageni (strain Fiocruz L1-130)).